The following is a 206-amino-acid chain: Casparian strip membrane protein 1 (206 aa).

Alanine 2 is modified (N-acetylalanine). Residues 2–43 (AKESTTIDVGEPSTVTKSSSHVVKDAKKKGFVAVASRGGAKR) are Cytoplasmic-facing. A helical membrane pass occupies residues 44-64 (GLAIFDFLLRLAAIAVTIGAA). At 65 to 95 (SVMYTAEETLPFFTQFLQFQAGYDDLPAFQY) the chain is on the extracellular side. A helical membrane pass occupies residues 96–116 (FVIAVAVVASYLVLSLPFSIV). Over 117–127 (SIVRPHAVAPR) the chain is Cytoplasmic. Residues 128 to 148 (LILLICDTLVVTLNTSAAAAA) traverse the membrane as a helical segment. Over 149–180 (ASITYLAHNGNQSTNWLPICQQFGDFCQNVST) the chain is Extracellular. Asparagine 159 and asparagine 177 each carry an N-linked (GlcNAc...) asparagine glycan. Residues 181–201 (AVVADSIAILFFIVLIIISAI) traverse the membrane as a helical segment. Topologically, residues 202–206 (ALKRH) are cytoplasmic.

Belongs to the Casparian strip membrane proteins (CASP) family. Homodimer and heterodimers with other CASP proteins. Interacts with CASP2, CASP3, CASP4 and CASP5.

The protein resides in the cell membrane. In terms of biological role, regulates membrane-cell wall junctions and localized cell wall deposition. Required for establishment of the Casparian strip membrane domain (CSD) and the subsequent formation of Casparian strips, a cell wall modification of the root endodermis that determines an apoplastic barrier between the intraorganismal apoplasm and the extraorganismal apoplasm and prevents lateral diffusion. The sequence is that of Casparian strip membrane protein 1 (CASP1) from Arabidopsis thaliana (Mouse-ear cress).